A 124-amino-acid chain; its full sequence is Small ribosomal subunit protein uS12 (124 aa).

The tract at residues Met-1–Ala-23 is disordered. At Asp-89 the chain carries 3-methylthioaspartic acid.

Belongs to the universal ribosomal protein uS12 family. As to quaternary structure, part of the 30S ribosomal subunit. Contacts proteins S8 and S17. May interact with IF1 in the 30S initiation complex.

Its function is as follows. With S4 and S5 plays an important role in translational accuracy. In terms of biological role, interacts with and stabilizes bases of the 16S rRNA that are involved in tRNA selection in the A site and with the mRNA backbone. Located at the interface of the 30S and 50S subunits, it traverses the body of the 30S subunit contacting proteins on the other side and probably holding the rRNA structure together. The combined cluster of proteins S8, S12 and S17 appears to hold together the shoulder and platform of the 30S subunit. This Pseudoalteromonas translucida (strain TAC 125) protein is Small ribosomal subunit protein uS12.